Consider the following 919-residue polypeptide: Glutamate receptor ionotropic, kainate 3 (919 aa).

The signal sequence occupies residues 1–31 (MTAPWRRLRSLVWEYWAGFLVCAFWIPDSRG). Topologically, residues 32–563 (MPHVIRIGGI…VFSFLNPLSP (532 aa)) are extracellular. Asn70, Asn76, Asn278, Asn381, Asn415, Asn426, and Asn433 each carry an N-linked (GlcNAc...) asparagine glycan. An intrachain disulfide couples Cys99 to Cys350. L-glutamate-binding residues include Pro518, Thr520, and Arg525. 2 N-linked (GlcNAc...) asparagine glycosylation sites follow: Asn548 and Asn551. A helical transmembrane segment spans residues 564–584 (DIWMYVLLAYLGVSCVLFVIA). The Cytoplasmic portion of the chain corresponds to 585-636 (RFSPYEWYDAHPCNPGSEVVENNFTLLNSFWFGMGSLMQQGSELMPKALSTR). The helical transmembrane segment at 637-657 (IIGGIWWFFTLIIISSYTANL) threads the bilayer. Residues 658 to 820 (AAFLTVERME…KEASALGIQK (163 aa)) lie on the Extracellular side of the membrane. L-glutamate is bound by residues Ala691, Thr692, and Glu739. Asn752 carries an N-linked (GlcNAc...) asparagine glycan. A helical membrane pass occupies residues 821–841 (IGGIFIVLAAGLVLSVLVAVG). Over 842 to 919 (EFIYKLRKTA…CSTSLAPVFP (78 aa)) the chain is Cytoplasmic. Ser869 carries the phosphoserine modification. Residue Lys887 forms a Glycyl lysine isopeptide (Lys-Gly) (interchain with G-Cter in SUMO1) linkage.

This sequence belongs to the glutamate-gated ion channel (TC 1.A.10.1) family. GRIK3 subfamily. As to quaternary structure, homotetramer, and heterotetramer with GRIK4 or GRIK5. Can form functional heteromeric receptors with GRIK2. Interacts with PRKCABP. Interacts with NETO2. Homomeric GluR7A forms functional kainate receptors which have very low sensitivity to glutamate. Can form functional heteromeric receptors with GRIK4 and GRIK5. In terms of assembly, homomeric GluR7B forms functional kainate receptors. Post-translationally, mass spectrometry data suggest the protein is N-glycosylated at five distinct sites. As to expression, expressed in the olfactory bulb (at protein level). Expressed in the deep cortical layers, dentate gyrus, reticular thalamic nucleus, mammillary bodies, pons, and cerebellum of the adult.

It is found in the cell membrane. The protein resides in the postsynaptic cell membrane. The enzyme catalyses Ca(2+)(in) = Ca(2+)(out). Ionotropic glutamate receptor that functions as a cation-permeable ligand-gated ion channel, gated by L-glutamate and the glutamatergic agonist kainic acid. Binding of the excitatory neurotransmitter L-glutamate induces a conformation change, leading to the opening of the cation channel, and thereby converts the chemical signal to an electrical impulse. The receptor then desensitizes rapidly and enters a transient inactive state, characterized by the presence of bound agonist. In association with GRIK2, involved in presynaptic facilitation of glutamate release at hippocampal mossy fiber synapses. Functionally, ionotropic glutamate receptor that functions as a ligand-gated cation channel, gated by L-glutamate and the glutamatergic agonist kainic acid. This Rattus norvegicus (Rat) protein is Glutamate receptor ionotropic, kainate 3 (Grik3).